A 443-amino-acid polypeptide reads, in one-letter code: Cell division protein FtsA (443 aa).

The protein belongs to the FtsA/MreB family. As to quaternary structure, self-interacts. Interacts with FtsZ.

The protein resides in the cell inner membrane. Its function is as follows. Cell division protein that is involved in the assembly of the Z ring. May serve as a membrane anchor for the Z ring. In Agrobacterium fabrum (strain C58 / ATCC 33970) (Agrobacterium tumefaciens (strain C58)), this protein is Cell division protein FtsA.